The primary structure comprises 501 residues: NAD(P)H-quinone oxidoreductase chain 4, chloroplastic (501 aa).

A run of 14 helical transmembrane segments spans residues 5–25, 38–58, 88–108, 114–131, 135–155, 168–188, 209–229, 243–263, 273–293, 306–326, 331–351, 387–407, 417–437, and 464–484; these read FPWL…IFFL, TCIC…HFQL, IGPI…AWPV, LFYL…GLFS, LLLF…LLSM, FILY…GMGL, ALEI…SPII, HYST…YGLI, AHSL…IYAA, IACS…SITD, GAIL…FLSG, LALP…GIIT, ILIT…LLSM, and FVSI…DCVF.

This sequence belongs to the complex I subunit 4 family.

The protein resides in the plastid. It localises to the chloroplast thylakoid membrane. It carries out the reaction a plastoquinone + NADH + (n+1) H(+)(in) = a plastoquinol + NAD(+) + n H(+)(out). The catalysed reaction is a plastoquinone + NADPH + (n+1) H(+)(in) = a plastoquinol + NADP(+) + n H(+)(out). This is NAD(P)H-quinone oxidoreductase chain 4, chloroplastic from Dioscorea elephantipes (Elephant's foot yam).